Consider the following 324-residue polypeptide: Elongation factor Ts, mitochondrial (324 aa).

A mitochondrion-targeting transit peptide spans 1–44 (MSLLRSLRFFPVACTGRSARAVLLQPSQPWHTLHAGPSLSSSAS). N6-succinyllysine occurs at positions 75 and 132. Serine 269 is subject to Phosphoserine.

The protein belongs to the EF-Ts family.

The protein resides in the mitochondrion. In terms of biological role, associates with the EF-Tu.GDP complex and induces the exchange of GDP to GTP. It remains bound to the aminoacyl-tRNA.EF-Tu.GTP complex up to the GTP hydrolysis stage on the ribosome. The chain is Elongation factor Ts, mitochondrial (Tsfm) from Rattus norvegicus (Rat).